The chain runs to 477 residues: Histidine--tRNA ligase (477 aa).

This sequence belongs to the class-II aminoacyl-tRNA synthetase family. As to quaternary structure, homodimer.

Its subcellular location is the cytoplasm. The catalysed reaction is tRNA(His) + L-histidine + ATP = L-histidyl-tRNA(His) + AMP + diphosphate + H(+). The chain is Histidine--tRNA ligase (hisS) from Xanthomonas campestris pv. campestris (strain ATCC 33913 / DSM 3586 / NCPPB 528 / LMG 568 / P 25).